The following is a 289-amino-acid chain: Pyridoxal kinase PdxY (289 aa).

Residues S9 and 44 to 45 (TQ) each bind substrate. ATP contacts are provided by D112, V144, E149, and K182. D221 serves as a coordination point for substrate.

The protein belongs to the pyridoxine kinase family. PdxY subfamily. Homodimer. It depends on Mg(2+) as a cofactor.

The enzyme catalyses pyridoxal + ATP = pyridoxal 5'-phosphate + ADP + H(+). It participates in cofactor metabolism; pyridoxal 5'-phosphate salvage; pyridoxal 5'-phosphate from pyridoxal: step 1/1. In terms of biological role, pyridoxal kinase involved in the salvage pathway of pyridoxal 5'-phosphate (PLP). Catalyzes the phosphorylation of pyridoxal to PLP. The protein is Pyridoxal kinase PdxY of Vibrio parahaemolyticus serotype O3:K6 (strain RIMD 2210633).